A 47-amino-acid polypeptide reads, in one-letter code: PRGSPRTEYEACRVRCQVAEHGVERQRRCQQVCEKRLREREGRREVD.

2 cysteine pairs are disulfide-bonded: Cys-12–Cys-33 and Cys-16–Cys-29.

As to quaternary structure, homotetramer.

It carries out the reaction Endohydrolysis of the N-glycosidic bond at one specific adenosine on the 28S rRNA.. Its function is as follows. Inhibits protein synthesis in animal cells. In Luffa aegyptiaca (Sponge gourd), this protein is Ribosome-inactivating protein luffin P1.